The chain runs to 120 residues: Insoluble matrix shell protein 2 (120 aa).

The first 20 residues, 1–20, serve as a signal peptide directing secretion; that stretch reads MHQSSLGVLVLFSLIYLCIS.

As to expression, component of the acid-insoluble organic matrix of the calcified shell.

The protein resides in the secreted. In Ruditapes philippinarum (Japanese carpet shell), this protein is Insoluble matrix shell protein 2.